The chain runs to 315 residues: Ornithine carbamoyltransferase (315 aa).

Residues 53-56, Gln80, Arg104, and 131-134 each bind carbamoyl phosphate; these read STRT and HPCQ. L-ornithine-binding positions include Asn163, Asp227, and 231–232; that span reads SM. Carbamoyl phosphate-binding positions include 267–268 and Arg295; that span reads CL.

This sequence belongs to the aspartate/ornithine carbamoyltransferase superfamily. OTCase family.

It is found in the cytoplasm. The enzyme catalyses carbamoyl phosphate + L-ornithine = L-citrulline + phosphate + H(+). The protein operates within amino-acid degradation; L-arginine degradation via ADI pathway; carbamoyl phosphate from L-arginine: step 2/2. Its function is as follows. Reversibly catalyzes the transfer of the carbamoyl group from carbamoyl phosphate (CP) to the N(epsilon) atom of ornithine (ORN) to produce L-citrulline. The protein is Ornithine carbamoyltransferase of Rhodococcus opacus (strain B4).